We begin with the raw amino-acid sequence, 215 residues long: Ras-related protein Rab-5A (215 aa).

GTP contacts are provided by Ser-29, Ala-30, Gly-32, Lys-33, Ser-34, Ser-35, His-46, Glu-47, Thr-52, and Gly-78. Position 34 (Ser-34) interacts with Mg(2+). Short sequence motifs (switch) lie at residues 44–56 and 77–93; these read QFHE…IGAA and AGQE…YRGA. Thr-52 contributes to the Mg(2+) binding site. Ser-84 bears the Phosphoserine mark. GTP contacts are provided by Asn-133, Lys-134, Asp-136, Ala-164, and Lys-165. The segment at 181 to 215 is disordered; sequence LPKNEPQNPGANSARGRGVDLTEPAQPARSQCCSN. Residues Cys-212 and Cys-213 are each lipidated (S-geranylgeranyl cysteine).

It belongs to the small GTPase superfamily. Rab family. In terms of assembly, interacts with GDI1; this promotes dissociation from membranes; phosphorylation at Ser-84 disrupts this interaction. Interacts with GDI2; phosphorylation at Ser-84 disrupts the interaction. Interacts with EEA1. Interacts with RIN1 and GAPVD1, which regulate its pathway, probably by acting as a GEF. Interacts with RINL. Interacts with ALS2CL, SUN2, ZFYVE20 and RUFY1. Interacts with RABEP1; one RABEP1 homodimer binds two RAB5A chains, but at opposite sides of the dimer. Interacts with SGSM1 and SGSM3. Interacts with PIK3CB. Interacts with OCRL and INPP5F. May be a component of a complex composed of RAB5A, DYN2 and PIK3C3. Does not interact with BLOC-3 complex (heterodimer of HPS1 and HPS4). Interacts with CLN5. Interacts with APPL2. Interacts with F8A1/F8A2/F8A3. Found in a complex with F8A1/F8A2/F8A3, HTT and RAB5A; mediates the recruitment of HTT by RAB5A onto early endosomes. Interacts with ATP9A. Interacts with PPP1R21; mediates the recruitment of FERRY complex by RAB5A onto early endosomes. It depends on Mg(2+) as a cofactor. Post-translationally, phosphorylation of Ser-84 in the switch II region by LRRK2 prevents the association of RAB regulatory proteins, including RAB GDP dissociation inhibitors GDI1 and GDI2.

It is found in the cell membrane. It localises to the early endosome membrane. Its subcellular location is the melanosome. The protein resides in the cytoplasmic vesicle. The protein localises to the cell projection. It is found in the ruffle. It localises to the membrane. Its subcellular location is the cytoplasm. The protein resides in the cytosol. The protein localises to the phagosome membrane. It is found in the endosome membrane. The enzyme catalyses GTP + H2O = GDP + phosphate + H(+). Its activity is regulated as follows. Regulated by guanine nucleotide exchange factors (GEFs) including RINL, which promote the exchange of bound GDP for free GTP. Regulated by GTPase activating proteins (GAPs) which increase the GTP hydrolysis activity. Inhibited by GDP dissociation inhibitors (GDIs). Functionally, the small GTPases Rab are key regulators of intracellular membrane trafficking, from the formation of transport vesicles to their fusion with membranes. Rabs cycle between an inactive GDP-bound form and an active GTP-bound form that is able to recruit to membranes different sets of downstream effectors directly responsible for vesicle formation, movement, tethering and fusion. RAB5A is required for the fusion of plasma membranes and early endosomes. Contributes to the regulation of filopodia extension. Required for the exosomal release of SDCBP, CD63, PDCD6IP and syndecan. Regulates maturation of apoptotic cell-containing phagosomes, probably downstream of DYN2 and PIK3C3. The protein is Ras-related protein Rab-5A of Mus musculus (Mouse).